The following is a 528-amino-acid chain: Cytochrome P450 monooxygenase ppsD (528 aa).

The chain crosses the membrane as a helical span at residues Leu-2–Leu-21. Asn-137 is a glycosylation site (N-linked (GlcNAc...) asparagine). Heme is bound at residue Cys-441. N-linked (GlcNAc...) asparagine glycosylation is found at Asn-450 and Asn-463.

Belongs to the cytochrome P450 family. Heme is required as a cofactor.

It localises to the membrane. Its function is as follows. Cytochrome P450 monooxygenase; part of the gene cluster that mediates the biosynthesis of 2,4'-dihydroxy-3'-methoxypropiophenone. The first step of the pathway is the conversion of acetate into acetyl-CoA by the acyl-CoA ligase ppsA. Acetyl-CoA is then used as a starter unit by the polyketide synthase ppsB and condensed with 4 malonyl-CoA unit to produce the pentaketide backbone. During polyketide extension, the polykedite chain is probably reduced and dehydrated by the KR and PT domains, respectively. O-methylation seems to be catalyzed by an unknown methyltransferase rather than by the CMeT domain of ppsB. Two hydroxylations and one further decarboxylation step catalyzed by yet unknown enzymes are then required to yield 4'-hydroxy-3'-methoxypropiophenone. PpsC functions as a carrier protein to transport 4'-hydroxy-3'-methoxypropiophenone to a specific cell compartment in which 4'-hydroxy-3'-methoxypropiophenone is hydroxylated to 2,4'-dihydroxy-3'-methoxypropiophenone by a still to be identified enzyme. The protein is Cytochrome P450 monooxygenase ppsD of Aspergillus oryzae (strain ATCC 42149 / RIB 40) (Yellow koji mold).